The chain runs to 993 residues: UPF0182 protein Sare_4110 (993 aa).

7 consecutive transmembrane segments (helical) span residues 18–38, 61–81, 110–130, 171–191, 209–229, 260–280, and 283–303; these read IGVLVGVFVLFTLLGWGVQAW, LLLFVTVGLAMAVVVGGNLWL, LGTWFAVVSVVVGLFAGLSAQ, GVAFTAVVLALIGALAVHYVF, AHLSALVAVFVLLKAVAYVLD, ILAYISVVVAIAVLVFSNAWM, and LVWPGISLALLGVSAVAIGGI. 2 disordered regions span residues 892 to 937 and 974 to 993; these read QGEK…ADAA and EQAAGPGSAATPTGSPSPGG. The segment covering 900 to 929 has biased composition (pro residues); the sequence is STPPPSGETPAPTPTPTPTPSSPSVTPPPV. Positions 976–993 are enriched in low complexity; it reads AAGPGSAATPTGSPSPGG.

This sequence belongs to the UPF0182 family.

The protein localises to the cell membrane. The chain is UPF0182 protein Sare_4110 from Salinispora arenicola (strain CNS-205).